A 601-amino-acid chain; its full sequence is uncharacterized protein (601 aa).

Residues 127–364 (SSLFSSGSPP…PAFANDDTVH (238 aa)) form a disordered region. Over residues 128–137 (SLFSSGSPPD) the composition is skewed to polar residues. Residues 141-154 (RNSTSNLSSVSTNS) show a composition bias toward low complexity. Polar residues-rich tracts occupy residues 159–177 (TIGS…ASQR), 199–213 (ALSS…NVTP), and 232–250 (SATN…SPSQ). Residues Ser247 and Ser281 each carry the phosphoserine modification. Positions 265 to 281 (SLSSSPSSEDSDLSLSS) are enriched in low complexity. Composition is skewed to basic and acidic residues over residues 286–296 (DEKKQPSKSEK) and 313–325 (GSKE…KEKA). Ser335 carries the phosphoserine modification. The span at 338–356 (DTSTEYDSNSLRRSRSNPA) shows a compositional bias: polar residues.

This is an uncharacterized protein from Schizosaccharomyces pombe (strain 972 / ATCC 24843) (Fission yeast).